We begin with the raw amino-acid sequence, 113 residues long: Iron-sulfur cluster insertion protein ErpA (113 aa).

Iron-sulfur cluster contacts are provided by Cys41, Cys105, and Cys107.

This sequence belongs to the HesB/IscA family. In terms of assembly, homodimer. Requires iron-sulfur cluster as cofactor.

Its function is as follows. Required for insertion of 4Fe-4S clusters for at least IspG. The protein is Iron-sulfur cluster insertion protein ErpA of Histophilus somni (strain 2336) (Haemophilus somnus).